A 126-amino-acid polypeptide reads, in one-letter code: Small ribosomal subunit protein uS13 (126 aa).

The disordered stretch occupies residues 99–126 (LRGQSTKNNARTRKGKKKTVANKKKATK). Residues 108-126 (ARTRKGKKKTVANKKKATK) show a composition bias toward basic residues.

It belongs to the universal ribosomal protein uS13 family. In terms of assembly, part of the 30S ribosomal subunit. Forms a loose heterodimer with protein S19. Forms two bridges to the 50S subunit in the 70S ribosome.

Its function is as follows. Located at the top of the head of the 30S subunit, it contacts several helices of the 16S rRNA. In the 70S ribosome it contacts the 23S rRNA (bridge B1a) and protein L5 of the 50S subunit (bridge B1b), connecting the 2 subunits; these bridges are implicated in subunit movement. Contacts the tRNAs in the A and P-sites. The protein is Small ribosomal subunit protein uS13 of Porphyromonas gingivalis (strain ATCC 33277 / DSM 20709 / CIP 103683 / JCM 12257 / NCTC 11834 / 2561).